The primary structure comprises 508 residues: Photosystem II CP47 reaction center protein (508 aa).

Transmembrane regions (helical) follow at residues 21–36 (SVHI…WAGS), 101–115 (IVFS…IWHW), 140–156 (GIHL…FGAF), 203–218 (IAAG…FHLS), 237–252 (VLSS…AFVV), and 457–472 (SFAL…HGAR).

This sequence belongs to the PsbB/PsbC family. PsbB subfamily. As to quaternary structure, PSII is composed of 1 copy each of membrane proteins PsbA, PsbB, PsbC, PsbD, PsbE, PsbF, PsbH, PsbI, PsbJ, PsbK, PsbL, PsbM, PsbT, PsbX, PsbY, PsbZ, Psb30/Ycf12, at least 3 peripheral proteins of the oxygen-evolving complex and a large number of cofactors. It forms dimeric complexes. Binds multiple chlorophylls. PSII binds additional chlorophylls, carotenoids and specific lipids. is required as a cofactor.

It localises to the plastid. Its subcellular location is the chloroplast thylakoid membrane. In terms of biological role, one of the components of the core complex of photosystem II (PSII). It binds chlorophyll and helps catalyze the primary light-induced photochemical processes of PSII. PSII is a light-driven water:plastoquinone oxidoreductase, using light energy to abstract electrons from H(2)O, generating O(2) and a proton gradient subsequently used for ATP formation. The polypeptide is Photosystem II CP47 reaction center protein (Platanus occidentalis (Sycamore)).